The sequence spans 337 residues: DNA-directed RNA polymerase subunit alpha (337 aa).

Positions 1–231 are alpha N-terminal domain (alpha-NTD); sequence MRNITISAYT…KQLSVFDKIT (231 aa). Residues 248–337 form an alpha C-terminal domain (alpha-CTD) region; the sequence is NTKLLQNITD…IAELKAQNEG (90 aa).

This sequence belongs to the RNA polymerase alpha chain family. Homodimer. The RNAP catalytic core consists of 2 alpha, 1 beta, 1 beta' and 1 omega subunit. When a sigma factor is associated with the core the holoenzyme is formed, which can initiate transcription.

The enzyme catalyses RNA(n) + a ribonucleoside 5'-triphosphate = RNA(n+1) + diphosphate. DNA-dependent RNA polymerase catalyzes the transcription of DNA into RNA using the four ribonucleoside triphosphates as substrates. The protein is DNA-directed RNA polymerase subunit alpha of Campylobacter jejuni subsp. doylei (strain ATCC BAA-1458 / RM4099 / 269.97).